The primary structure comprises 201 residues: Peptidyl-prolyl cis-trans isomerase CYP19-4 (201 aa).

The first 23 residues, 1–23, serve as a signal peptide directing secretion; the sequence is MAKASFILLGTLFLFGAIASIQA. Residues 35 to 198 enclose the PPIase cyclophilin-type domain; sequence YFDVEIDGKS…SKVVIADSGE (164 aa).

It belongs to the cyclophilin-type PPIase family. As to quaternary structure, interacts with EMB30/GNOM. In terms of tissue distribution, ubiquitous, mostly in aerial organs (at protein level).

It is found in the cytoplasm. The protein resides in the membrane. Its subcellular location is the endoplasmic reticulum. It localises to the secreted. The enzyme catalyses [protein]-peptidylproline (omega=180) = [protein]-peptidylproline (omega=0). Its activity is regulated as follows. Binds cyclosporin A (CsA). CsA mediates some of its effects via an inhibitory action on PPIase. PPIases accelerate the folding of proteins. It catalyzes the cis-trans isomerization of proline imidic peptide bonds in oligopeptides. May be involved during embryogenesis and organ development by regulating the folding of EMB30/GNOM, and thus, by modulating its activity. This Arabidopsis thaliana (Mouse-ear cress) protein is Peptidyl-prolyl cis-trans isomerase CYP19-4 (CYP19-4).